A 527-amino-acid polypeptide reads, in one-letter code: Bifunctional purine biosynthesis protein PurH (527 aa).

The MGS-like domain maps to 1–149 (MASDFLPVRR…KNFARVAVAT (149 aa)).

Belongs to the PurH family.

It carries out the reaction (6R)-10-formyltetrahydrofolate + 5-amino-1-(5-phospho-beta-D-ribosyl)imidazole-4-carboxamide = 5-formamido-1-(5-phospho-D-ribosyl)imidazole-4-carboxamide + (6S)-5,6,7,8-tetrahydrofolate. The enzyme catalyses IMP + H2O = 5-formamido-1-(5-phospho-D-ribosyl)imidazole-4-carboxamide. It functions in the pathway purine metabolism; IMP biosynthesis via de novo pathway; 5-formamido-1-(5-phospho-D-ribosyl)imidazole-4-carboxamide from 5-amino-1-(5-phospho-D-ribosyl)imidazole-4-carboxamide (10-formyl THF route): step 1/1. It participates in purine metabolism; IMP biosynthesis via de novo pathway; IMP from 5-formamido-1-(5-phospho-D-ribosyl)imidazole-4-carboxamide: step 1/1. This chain is Bifunctional purine biosynthesis protein PurH, found in Xanthomonas campestris pv. campestris (strain 8004).